A 382-amino-acid polypeptide reads, in one-letter code: Chaperone protein DnaJ (382 aa).

The J domain maps to 5-70; that stretch reads DYYEVLGVSR…DKKAAYDRYG (66 aa). The CR-type zinc-finger motif lies at 141–219; that stretch reads GVQKTINVPA…CHGAGRVEKE (79 aa). 8 residues coordinate Zn(2+): cysteine 154, cysteine 157, cysteine 171, cysteine 174, cysteine 193, cysteine 196, cysteine 207, and cysteine 210. CXXCXGXG motif repeat units lie at residues 154–161, 171–178, 193–200, and 207–214; these read CDACKGTG, CPTCSGMG, CPTCNGMG, and CKVCHGAG.

Belongs to the DnaJ family. Homodimer. Requires Zn(2+) as cofactor.

The protein localises to the cytoplasm. In terms of biological role, participates actively in the response to hyperosmotic and heat shock by preventing the aggregation of stress-denatured proteins and by disaggregating proteins, also in an autonomous, DnaK-independent fashion. Unfolded proteins bind initially to DnaJ; upon interaction with the DnaJ-bound protein, DnaK hydrolyzes its bound ATP, resulting in the formation of a stable complex. GrpE releases ADP from DnaK; ATP binding to DnaK triggers the release of the substrate protein, thus completing the reaction cycle. Several rounds of ATP-dependent interactions between DnaJ, DnaK and GrpE are required for fully efficient folding. Also involved, together with DnaK and GrpE, in the DNA replication of plasmids through activation of initiation proteins. The chain is Chaperone protein DnaJ from Cereibacter sphaeroides (strain ATCC 17023 / DSM 158 / JCM 6121 / CCUG 31486 / LMG 2827 / NBRC 12203 / NCIMB 8253 / ATH 2.4.1.) (Rhodobacter sphaeroides).